The chain runs to 270 residues: uncharacterized protein (270 aa).

2 stretches are compositionally biased toward basic and acidic residues: residues 1-13 (MSEFKIVSRKDLY) and 49-73 (EVERTDSSLDLKESNNSAHEQKEEK). 3 disordered regions span residues 1-76 (MSEF…KQEE), 90-111 (STSPAQEEQGSSTQEKDTPQTE), and 204-270 (KKRR…FRTE). The span at 90-102 (STSPAQEEQGSST) shows a compositional bias: polar residues. Positions 204 to 216 (KKRRPGQKQRAAK) are enriched in basic residues. Over residues 218 to 235 (LALERTKERDTKAREIKK) the composition is skewed to basic and acidic residues. A compositionally biased stretch (basic residues) spans 236–253 (QLKKKFHKRGGKKNKKKV).

This is an uncharacterized protein from Saccharomyces cerevisiae (strain ATCC 204508 / S288c) (Baker's yeast).